Consider the following 102-residue polypeptide: Small ribosomal subunit protein uS10 (102 aa).

The protein belongs to the universal ribosomal protein uS10 family. In terms of assembly, part of the 30S ribosomal subunit.

In terms of biological role, involved in the binding of tRNA to the ribosomes. This Streptococcus pneumoniae (strain CGSP14) protein is Small ribosomal subunit protein uS10.